The chain runs to 143 residues: MAKKIQAYIKLQVKAGQANPSPPVGPALGQHGVNIMEFCKAFNAKTQGQEPGLPTPVIITVYSDRSFTFETKSTPAAVLLKKAAGITSGSARPNSQKVGTVTRAQLEEIAKTKQADLTAADLDAAVRTIAGSARSMGLNVEGV.

The protein belongs to the universal ribosomal protein uL11 family. Part of the ribosomal stalk of the 50S ribosomal subunit. Interacts with L10 and the large rRNA to form the base of the stalk. L10 forms an elongated spine to which L12 dimers bind in a sequential fashion forming a multimeric L10(L12)X complex. In terms of processing, one or more lysine residues are methylated.

Functionally, forms part of the ribosomal stalk which helps the ribosome interact with GTP-bound translation factors. In Pseudomonas paraeruginosa (strain DSM 24068 / PA7) (Pseudomonas aeruginosa (strain PA7)), this protein is Large ribosomal subunit protein uL11.